A 281-amino-acid polypeptide reads, in one-letter code: Phytanoyl-CoA dioxygenase 1 (281 aa).

2-oxoglutarate-binding positions include Lys98, Met137, 152 to 154 (HQD), and Trp169. Fe cation-binding residues include His152 and Asp154. Position 237 (His237) interacts with Fe cation. 2-oxoglutarate contacts are provided by Ser239 and Arg248.

This sequence belongs to the PhyH family. The cofactor is Fe cation. L-ascorbate serves as cofactor.

The enzyme catalyses phytanoyl-CoA + 2-oxoglutarate + O2 = 2-hydroxyphytanoyl-CoA + succinate + CO2. Its pathway is lipid metabolism; fatty acid metabolism. In terms of biological role, converts phytanoyl-CoA to 2-hydroxyphytanoyl-CoA. The chain is Phytanoyl-CoA dioxygenase 1 from Oryza sativa subsp. japonica (Rice).